The primary structure comprises 339 residues: Heat-inducible transcription repressor HrcA (339 aa).

Belongs to the HrcA family.

In terms of biological role, negative regulator of class I heat shock genes (grpE-dnaK-dnaJ and groELS operons). Prevents heat-shock induction of these operons. The sequence is that of Heat-inducible transcription repressor HrcA from Thermotoga neapolitana (strain ATCC 49049 / DSM 4359 / NBRC 107923 / NS-E).